The sequence spans 150 residues: Deoxyuridine 5'-triphosphate nucleotidohydrolase (150 aa).

Substrate contacts are provided by residues 69–71, N82, 86–88, and M96; these read RSG and LID.

It belongs to the dUTPase family. Requires Mg(2+) as cofactor.

The enzyme catalyses dUTP + H2O = dUMP + diphosphate + H(+). It functions in the pathway pyrimidine metabolism; dUMP biosynthesis; dUMP from dCTP (dUTP route): step 2/2. This enzyme is involved in nucleotide metabolism: it produces dUMP, the immediate precursor of thymidine nucleotides and it decreases the intracellular concentration of dUTP so that uracil cannot be incorporated into DNA. This is Deoxyuridine 5'-triphosphate nucleotidohydrolase from Acinetobacter baylyi (strain ATCC 33305 / BD413 / ADP1).